A 419-amino-acid polypeptide reads, in one-letter code: UDP-N-acetylglucosamine 1-carboxyvinyltransferase (419 aa).

Position 22–23 (22–23 (KN)) interacts with phosphoenolpyruvate. Arginine 91 contacts UDP-N-acetyl-alpha-D-glucosamine. The active-site Proton donor is cysteine 115. Cysteine 115 carries the 2-(S-cysteinyl)pyruvic acid O-phosphothioketal modification. Residues 120–124 (RPVDL), 160–163 (KVSV), aspartate 305, and valine 327 each bind UDP-N-acetyl-alpha-D-glucosamine.

The protein belongs to the EPSP synthase family. MurA subfamily.

The protein resides in the cytoplasm. The catalysed reaction is phosphoenolpyruvate + UDP-N-acetyl-alpha-D-glucosamine = UDP-N-acetyl-3-O-(1-carboxyvinyl)-alpha-D-glucosamine + phosphate. The protein operates within cell wall biogenesis; peptidoglycan biosynthesis. Cell wall formation. Adds enolpyruvyl to UDP-N-acetylglucosamine. The protein is UDP-N-acetylglucosamine 1-carboxyvinyltransferase of Escherichia coli O157:H7.